The sequence spans 380 residues: uncharacterized protein (380 aa).

The 32-residue stretch at 287–318 (LRPKIYQDKCKNCRECLVEKYCPTFAIKRENG) folds into the 4Fe-4S ferredoxin-type domain.

This is an uncharacterized protein from Methanocaldococcus jannaschii (strain ATCC 43067 / DSM 2661 / JAL-1 / JCM 10045 / NBRC 100440) (Methanococcus jannaschii).